The following is a 217-amino-acid chain: Somatotropin (217 aa).

The signal sequence occupies residues 1–26 (MAPGSRTSLLLAFGLLCLPWLQEGSA). Histidine 44 serves as a coordination point for Zn(2+). A disulfide bond links cysteine 79 and cysteine 191. Serine 132 carries the phosphoserine modification. Glutamate 200 contributes to the Zn(2+) binding site. A disulfide bridge connects residues cysteine 208 and cysteine 215.

This sequence belongs to the somatotropin/prolactin family.

It is found in the secreted. Functionally, plays an important role in growth control. Its major role in stimulating body growth is to stimulate the liver and other tissues to secrete IGF1. It stimulates both the differentiation and proliferation of myoblasts. It also stimulates amino acid uptake and protein synthesis in muscle and other tissues. This Pan troglodytes (Chimpanzee) protein is Somatotropin (GH1).